The chain runs to 571 residues: Urease subunit alpha (571 aa).

The region spanning 133 to 571 (GGIDTHVHFI…LPLTQRYFLF (439 aa)) is the Urease domain. Ni(2+) is bound by residues His-138, His-140, and Lys-221. Position 221 is an N6-carboxylysine (Lys-221). A substrate-binding site is contributed by His-223. 2 residues coordinate Ni(2+): His-250 and His-276. The Proton donor role is filled by His-324. Position 364 (Asp-364) interacts with Ni(2+).

It belongs to the metallo-dependent hydrolases superfamily. Urease alpha subunit family. Heterotrimer of UreA (gamma), UreB (beta) and UreC (alpha) subunits. Three heterotrimers associate to form the active enzyme. Requires Ni cation as cofactor. Carboxylation allows a single lysine to coordinate two nickel ions.

Its subcellular location is the cytoplasm. The catalysed reaction is urea + 2 H2O + H(+) = hydrogencarbonate + 2 NH4(+). The protein operates within nitrogen metabolism; urea degradation; CO(2) and NH(3) from urea (urease route): step 1/1. The chain is Urease subunit alpha from Staphylococcus aureus (strain MRSA252).